The sequence spans 578 residues: MMSFPIALFADVNQSFRANLVVSSYHHAITFPTVRGANFSTFFPRNFSVSADVWLCGANFSQEWQLMQPVCSTKYDSITIFITVAVVLTLITLWTILGNFFVLMALYRYGTLRTMSNCLIGNLAISDLLLAVTVLPISTVHDLLGYWVFGEFTCTLWLCMDVLYCTASIWGLCTVAFDRYLATVYPVWYHDQRSVRKAVGCIVFVWIFSIVISFAPFIGWQHMIPSFFSFNASIQRYQCILFTSSSYVLYSSMGSFVIPAILMAFMYVRIFVVLHNQSRGVKFKSGLKISSSKYNGCPVINEPSREGINGLGRDVTNTTLLSDAVGSSADLTSNGKDDPRVLATAPIELTEDVPPLNGHHHRTVHETPYVSGLHTKRSNSFALPTELEKKCKPLTNNILHMMDFDRRNSHNAVIQRSASEMVNLDVSKHELLISNVCHRSKSATALTSETGDPLGSLAGPRRSLQCNVGGLVRNKHMTLSMKRRFELREQRATKRMLLIMACFCVCWMPFLFMYILRSVCDTCHMNQHFVAAIIWLGYVNSSLNPVLYTLFNDDFKVAFKRLIGARSPSAYRSPGPRR.

Residues 1–84 (MMSFPIALFA…YDSITIFITV (84 aa)) are Extracellular-facing. N-linked (GlcNAc...) asparagine glycosylation is found at Asn13, Asn38, Asn46, and Asn59. Residues 85 to 107 (AVVLTLITLWTILGNFFVLMALY) form a helical membrane-spanning segment. At 108-117 (RYGTLRTMSN) the chain is on the cytoplasmic side. Residues 118–139 (CLIGNLAISDLLLAVTVLPIST) form a helical membrane-spanning segment. Residues 140-156 (VHDLLGYWVFGEFTCTL) are Extracellular-facing. Cys154 and Cys239 are disulfide-bonded. A helical membrane pass occupies residues 157-177 (WLCMDVLYCTASIWGLCTVAF). Topologically, residues 178-197 (DRYLATVYPVWYHDQRSVRK) are cytoplasmic. A helical membrane pass occupies residues 198–220 (AVGCIVFVWIFSIVISFAPFIGW). Topologically, residues 221 to 251 (QHMIPSFFSFNASIQRYQCILFTSSSYVLYS) are extracellular. A glycan (N-linked (GlcNAc...) asparagine) is linked at Asn231. Residues 252–272 (SMGSFVIPAILMAFMYVRIFV) form a helical membrane-spanning segment. The Cytoplasmic segment spans residues 273 to 495 (VLHNQSRGVK…ELREQRATKR (223 aa)). A helical transmembrane segment spans residues 496-517 (MLLIMACFCVCWMPFLFMYILR). Over 518–531 (SVCDTCHMNQHFVA) the chain is Extracellular. The helical transmembrane segment at 532-553 (AIIWLGYVNSSLNPVLYTLFND) threads the bilayer. The Cytoplasmic segment spans residues 554–578 (DFKVAFKRLIGARSPSAYRSPGPRR).

This sequence belongs to the G-protein coupled receptor 1 family.

The protein localises to the cell membrane. Functionally, receptor for octopamine. Octopamine (OA) is a neurotransmitter, neurohormone, and neuromodulator in invertebrates. This receptor induces a long lasting opening of voltage- independent chloride channels, a process which seems to involve protein phosphorylation but does not require either cAPK or PKC. The rank order of potency for agonists is p-synephrine &gt; p-octopamine &gt; xylometazoline &gt; B-HT920 &gt; norepinephrine = clonidine &gt; epinephrine &gt; p-tyramine &gt; phenylephrine = oxymetazoline = mehoxamine = dopamine &gt; serotonin &gt; histamine. For antagonists, the rank order is rauwolscine = mianserin &gt; phentolamine &gt; chlorpromazine &gt; spiperone &gt; yohimbine &gt; propanolol &gt; alprenolol &gt; prazosine &gt; pindolol. This Lymnaea stagnalis (Great pond snail) protein is Octopamine receptor 2.